The primary structure comprises 156 residues: Small ribosomal subunit protein uS7 (156 aa).

Belongs to the universal ribosomal protein uS7 family. In terms of assembly, part of the 30S ribosomal subunit. Contacts proteins S9 and S11.

Functionally, one of the primary rRNA binding proteins, it binds directly to 16S rRNA where it nucleates assembly of the head domain of the 30S subunit. Is located at the subunit interface close to the decoding center, probably blocks exit of the E-site tRNA. This chain is Small ribosomal subunit protein uS7, found in Nostoc punctiforme (strain ATCC 29133 / PCC 73102).